The chain runs to 158 residues: 3-dehydroquinate dehydratase (158 aa).

Catalysis depends on Tyr-24, which acts as the Proton acceptor. Substrate-binding residues include Asn-75, His-81, and Asp-88. Residue His-101 is the Proton donor of the active site. Residues 102–103 (LS) and Arg-112 each bind substrate.

It belongs to the type-II 3-dehydroquinase family. Homododecamer.

The catalysed reaction is 3-dehydroquinate = 3-dehydroshikimate + H2O. It participates in metabolic intermediate biosynthesis; chorismate biosynthesis; chorismate from D-erythrose 4-phosphate and phosphoenolpyruvate: step 3/7. In terms of biological role, catalyzes a trans-dehydration via an enolate intermediate. This chain is 3-dehydroquinate dehydratase, found in Bartonella bacilliformis (strain ATCC 35685 / KC583 / Herrer 020/F12,63).